The following is a 120-amino-acid chain: Acylphosphatase-1 (120 aa).

Ala-2 is modified (N-acetylalanine). The Acylphosphatase-like domain maps to 8-98 (SCEFEVFGRV…YGYANFHIKP (91 aa)). Catalysis depends on residues Arg-23 and Asn-41. A disordered region spans residues 91 to 120 (YANFHIKPDPHENRPVHEGLGSSSSHHDSN). Residues 96-107 (IKPDPHENRPVH) are compositionally biased toward basic and acidic residues.

This sequence belongs to the acylphosphatase family.

It is found in the cytoplasm. It catalyses the reaction an acyl phosphate + H2O = a carboxylate + phosphate + H(+). The protein is Acylphosphatase-1 (Acyp) of Drosophila melanogaster (Fruit fly).